Here is a 446-residue protein sequence, read N- to C-terminus: B3 domain-containing protein REM12 (446 aa).

Residues 1–46 (MVLNSSDLGPSRCDIRDLPAPSSTNDQGKTELARKKKVKRSNTEIE) form a disordered region. 2 consecutive DNA-binding regions (TF-B3) follow at residues 56–153 (CFVA…FCST) and 193–289 (FMTL…VNTQ). The segment at 295 to 334 (SQQGECSRDSEKESSICAEPSRGNKKWKATNNRKERRDSS) is disordered. Positions 341–435 (YVTLTLTPED…TTPVFKFCSN (95 aa)) form a DNA-binding region, TF-B3 3.

Its subcellular location is the nucleus. The chain is B3 domain-containing protein REM12 (REM12) from Arabidopsis thaliana (Mouse-ear cress).